The sequence spans 286 residues: Master replication protein (286 aa).

One can recognise a CRESS-DNA virus Rep endonuclease domain in the interval 2 to 96 (ARQVICWCFT…LEGPWEYGEF (95 aa)). An RCR-1 motif is present at residues 9 to 12 (CFTL). The a divalent metal cation site is built by E33 and H41. The RCR-2 signature appears at 41–43 (HFQ). A Nuclear localization signal motif is present at residues 50–70 (KRTSLAGMKKLIPGAHFEKRR). The For DNA cleavage activity role is filled by Y79. Positions 79 to 82 (YSMK) match the RCR-3 motif. An a divalent metal cation-binding site is contributed by D84. The Nuclear localization signal signature appears at 96–102 (FVPTIED). Residue 186–188 (GKT) coordinates ATP.

Belongs to the nanoviridea/circoviridae replication-associated protein family. In terms of assembly, homooligomer (Potential). Rep binds to repeated DNA motifs (iterons). The cofactor is Mg(2+). Mn(2+) serves as cofactor.

The protein localises to the host nucleus. It catalyses the reaction ATP + H2O = ADP + phosphate + H(+). In terms of biological role, essential for the replication of all genomic viral ssDNA (trans-replication). The closed circular ssDNA genome is first converted to a superhelical dsDNA. Rep binds a specific hairpin at the genome origin of replication. Introduces an endonucleolytic nick within the conserved sequence 5'-A[GT]TATTAC-3' in the intergenic region of the genome, thereby initiating the rolling circle replication (RCR). Following cleavage, binds covalently to the 5'-phosphate of DNA as a tyrosyl ester. The cleavage gives rise to a free 3'-OH that serves as a primer for the cellular DNA polymerase. The polymerase synthesizes the (+) strand DNA by rolling circle mechanism. After one round of replication, a Rep-catalyzed nucleotidyl transfer reaction releases a circular single-stranded virus genome, thereby terminating the replication. Displays origin-specific DNA cleavage, nucleotidyl transferase, ATPase and helicase activities. This Cicer arietinum (Chickpea) protein is Master replication protein (DNA-R).